A 344-amino-acid chain; its full sequence is Anthranilate phosphoribosyltransferase (344 aa).

5-phospho-alpha-D-ribose 1-diphosphate contacts are provided by residues glycine 80, 83-84 (GD), threonine 88, 90-93 (NVST), 108-116 (KHGNRSVSS), and serine 120. An anthranilate-binding site is contributed by glycine 80. Serine 92 is a Mg(2+) binding site. Asparagine 111 provides a ligand contact to anthranilate. Arginine 166 serves as a coordination point for anthranilate. Mg(2+) is bound by residues aspartate 225 and glutamate 226.

It belongs to the anthranilate phosphoribosyltransferase family. Homodimer. It depends on Mg(2+) as a cofactor.

It catalyses the reaction N-(5-phospho-beta-D-ribosyl)anthranilate + diphosphate = 5-phospho-alpha-D-ribose 1-diphosphate + anthranilate. The protein operates within amino-acid biosynthesis; L-tryptophan biosynthesis; L-tryptophan from chorismate: step 2/5. Functionally, catalyzes the transfer of the phosphoribosyl group of 5-phosphorylribose-1-pyrophosphate (PRPP) to anthranilate to yield N-(5'-phosphoribosyl)-anthranilate (PRA). This is Anthranilate phosphoribosyltransferase from Legionella pneumophila (strain Lens).